Consider the following 323-residue polypeptide: MIEFGDFYQRIAKGNLSHWLDTLPAQLSAWQRESLHGKFKQWFNSVEHLPALTPTRLDLLNGVRAEMDTPLSPGQLEGIEKMLRTMMPWRKGPFSLYGIDIDTEWHSDWKWDRVLPHISPLAGRTILDVGCGSGYHLWRMLGAGAQLAVGIDPMQLFLCQFEAVRKLLGGDQRAHLLPLGIEQLPELAAFDTVFSMGVLYHRRSPLDHLYQLKNQLVSEGELVLETLVIEGDRNQVLVPGDRYAQMRNVYFIPSAEALKCWLEKCGFVDVKIADMCVTSTEEQRRTDWMTSESLAEFLDPNDPGKTIEGYPSPLRAVLVARKP.

Carboxy-S-adenosyl-L-methionine contacts are provided by residues K91, W105, K110, G130, 181–182 (IE), M196, Y200, and R315.

This sequence belongs to the class I-like SAM-binding methyltransferase superfamily. CmoB family. In terms of assembly, homotetramer.

It carries out the reaction carboxy-S-adenosyl-L-methionine + 5-hydroxyuridine(34) in tRNA = 5-carboxymethoxyuridine(34) in tRNA + S-adenosyl-L-homocysteine + H(+). In terms of biological role, catalyzes carboxymethyl transfer from carboxy-S-adenosyl-L-methionine (Cx-SAM) to 5-hydroxyuridine (ho5U) to form 5-carboxymethoxyuridine (cmo5U) at position 34 in tRNAs. The protein is tRNA U34 carboxymethyltransferase of Serratia proteamaculans (strain 568).